A 442-amino-acid polypeptide reads, in one-letter code: Tubulin beta chain (442 aa).

Residues Gln11, Glu69, Ser138, Gly142, Thr143, Gly144, Asn204, and Asn226 each coordinate GTP. Glu69 contacts Mg(2+).

Belongs to the tubulin family. Dimer of alpha and beta chains. A typical microtubule is a hollow water-filled tube with an outer diameter of 25 nm and an inner diameter of 15 nM. Alpha-beta heterodimers associate head-to-tail to form protofilaments running lengthwise along the microtubule wall with the beta-tubulin subunit facing the microtubule plus end conferring a structural polarity. Microtubules usually have 13 protofilaments but different protofilament numbers can be found in some organisms and specialized cells. The cofactor is Mg(2+).

The protein localises to the cytoplasm. Its subcellular location is the cytoskeleton. In terms of biological role, tubulin is the major constituent of microtubules, a cylinder consisting of laterally associated linear protofilaments composed of alpha- and beta-tubulin heterodimers. Microtubules grow by the addition of GTP-tubulin dimers to the microtubule end, where a stabilizing cap forms. Below the cap, tubulin dimers are in GDP-bound state, owing to GTPase activity of alpha-tubulin. The sequence is that of Tubulin beta chain (bPT2) from Paramecium tetraurelia.